Reading from the N-terminus, the 471-residue chain is Putative multidrug resistance protein MdtD (471 aa).

Over 1–11 the chain is Periplasmic; the sequence is MTDLPDSTRWR. A helical transmembrane segment spans residues 12–32; the sequence is LWIVAFGFFMQSLDTTIVNTA. The Cytoplasmic portion of the chain corresponds to 33-48; it reads LPSMAQSLGESPLHMH. Residues 49–69 form a helical membrane-spanning segment; it reads MVIVSYVLTVAVMLPASGWLA. The Periplasmic segment spans residues 70-76; sequence DKVGVRN. Residues 77-97 form a helical membrane-spanning segment; the sequence is IFFTAIVLFTLGSLFCALSGT. Topologically, residues 98-101 are cytoplasmic; the sequence is LNEL. Residues 102–124 form a helical membrane-spanning segment; sequence LLARALQGVGGAMMVPVGRLTVM. Over 125 to 137 the chain is Periplasmic; sequence KIVPREQYMAAMT. The chain crosses the membrane as a helical span at residues 138–158; the sequence is FVTLPGQVGPLLGPALGGLLV. The Cytoplasmic portion of the chain corresponds to 159-164; that stretch reads EYASWH. Residues 165–185 traverse the membrane as a helical segment; sequence WIFLINIPVGIIGAIATLMLM. The Periplasmic portion of the chain corresponds to 186-196; it reads PNYTMQTRRFD. A helical transmembrane segment spans residues 197–217; sequence LSGFLLLAVGMAVLTLALDGS. At 218 to 224 the chain is on the cytoplasmic side; it reads KGTGLSP. Residues 225–245 form a helical membrane-spanning segment; sequence LAIAGLVAVGVVALVLYLLHA. The Periplasmic portion of the chain corresponds to 246–262; it reads QNNNRALFSLKLFRTRT. A helical membrane pass occupies residues 263–283; it reads FSLGLAGSFAGRIGSGMLPFM. Over 284-285 the chain is Cytoplasmic; that stretch reads TP. The chain crosses the membrane as a helical span at residues 286–306; that stretch reads VFLQIGLGFSPFHAGLMMIPM. Residues 307 to 341 are Periplasmic-facing; that stretch reads VLGSMGMKRIVVQVVNRFGYRRVLVATTLGLSLVT. A helical transmembrane segment spans residues 342 to 362; it reads LLFMTTALLGWYYVLPFVLFL. At 363–395 the chain is on the cytoplasmic side; it reads QGMVNSTRFSSMNTLTLKDLPDNLASSGNSLLS. The chain crosses the membrane as a helical span at residues 396 to 416; sequence MIMQLSMSIGVTIAGLLLGLF. Topologically, residues 417–430 are periplasmic; sequence GSQHVSVDSGTTQT. The chain crosses the membrane as a helical span at residues 431 to 451; that stretch reads VFMYTWLSMASIIALPAFIFA. At 452–471 the chain is on the cytoplasmic side; it reads RVPNDTHQNVAISRRKRSAQ.

It belongs to the major facilitator superfamily. TCR/Tet family.

It localises to the cell inner membrane. This is Putative multidrug resistance protein MdtD from Escherichia coli O6:K15:H31 (strain 536 / UPEC).